The sequence spans 298 residues: Tyrosine recombinase XerD (298 aa).

In terms of domain architecture, Core-binding (CB) spans 3–88 (ALDHPLIDQF…GLRGFFRYLL (86 aa)). The Tyr recombinase domain maps to 109–292 (PLPKSLSEAD…AKARLQQLHA (184 aa)). Residues R149, K173, H244, R247, and H270 contribute to the active site. Y279 serves as the catalytic O-(3'-phospho-DNA)-tyrosine intermediate.

Belongs to the 'phage' integrase family. XerD subfamily. As to quaternary structure, forms a cyclic heterotetrameric complex composed of two molecules of XerC and two molecules of XerD.

Its subcellular location is the cytoplasm. Functionally, site-specific tyrosine recombinase, which acts by catalyzing the cutting and rejoining of the recombining DNA molecules. The XerC-XerD complex is essential to convert dimers of the bacterial chromosome into monomers to permit their segregation at cell division. It also contributes to the segregational stability of plasmids. This chain is Tyrosine recombinase XerD, found in Pseudomonas putida (strain ATCC 47054 / DSM 6125 / CFBP 8728 / NCIMB 11950 / KT2440).